The primary structure comprises 443 residues: Chromosomal replication initiator protein DnaA (443 aa).

A domain I, interacts with DnaA modulators region spans residues 1–73 (MYGDHRQIWE…YDAASKATNK (73 aa)). A domain II region spans residues 73 to 106 (KLYEIKILSEDEEEYREIKESIEKENLTESTTLS). Residues 107 to 323 (TLNPKYTFDT…GALIRIVAFS (217 aa)) are domain III, AAA+ region. ATP is bound by residues Gly151, Gly153, Lys154, and Thr155. Residues 324 to 443 (NLTKANIDLE…EELKKRIKGY (120 aa)) form a domain IV, binds dsDNA region.

Belongs to the DnaA family. Oligomerizes as a right-handed, spiral filament on DNA at oriC.

It localises to the cytoplasm. Plays an essential role in the initiation and regulation of chromosomal replication. ATP-DnaA binds to the origin of replication (oriC) to initiate formation of the DNA replication initiation complex once per cell cycle. Binds the DnaA box (a 9 base pair repeat at the origin) and separates the double-stranded (ds)DNA. Forms a right-handed helical filament on oriC DNA; dsDNA binds to the exterior of the filament while single-stranded (ss)DNA is stabiized in the filament's interior. The ATP-DnaA-oriC complex binds and stabilizes one strand of the AT-rich DNA unwinding element (DUE), permitting loading of DNA polymerase. After initiation quickly degrades to an ADP-DnaA complex that is not apt for DNA replication. Binds acidic phospholipids. The polypeptide is Chromosomal replication initiator protein DnaA (Thermoanaerobacter pseudethanolicus (strain ATCC 33223 / 39E) (Clostridium thermohydrosulfuricum)).